Consider the following 41-residue polypeptide: MKIRNSLKSAKVRDKNCRVVRRHGRVYVINKKNPRMKARQG.

Belongs to the bacterial ribosomal protein bL36 family.

The protein is Large ribosomal subunit protein bL36 of Granulibacter bethesdensis (strain ATCC BAA-1260 / CGDNIH1).